Here is a 401-residue protein sequence, read N- to C-terminus: Probable aspartic-type endopeptidase TRV_05382 (401 aa).

The first 22 residues, 1–22 (MWHSPFFTAFTLFLGFFTLTLA), serve as a signal peptide directing secretion. N-linked (GlcNAc...) asparagine glycosylation is found at asparagine 80 and asparagine 102. The Peptidase A1 domain occupies 94–398 (FVNEITIGNN…DHDGPKMGFA (305 aa)). Aspartate 110 is a catalytic residue. The N-linked (GlcNAc...) asparagine glycan is linked to asparagine 282. Residue aspartate 292 is part of the active site. N-linked (GlcNAc...) asparagine glycosylation occurs at asparagine 329.

The protein belongs to the peptidase A1 family.

It is found in the secreted. Probable aspartic-type endopeptidase which contributes to virulence. This Trichophyton verrucosum (strain HKI 0517) protein is Probable aspartic-type endopeptidase TRV_05382.